Here is a 319-residue protein sequence, read N- to C-terminus: Mitochondrial fission regulator 1-like-A (319 aa).

The tract at residues M1–T37 is disordered. The span at E9–R30 shows a compositional bias: basic and acidic residues.

The protein belongs to the MTFR1 family.

The protein localises to the mitochondrion outer membrane. Functionally, mitochondrial protein required for adaptation of miochondrial dynamics to metabolic changes. Regulates mitochondrial morphology at steady state and mediates AMPK-dependent stress-induced mitochondrial fragmentation via the control of OPA1 levels. This Xenopus laevis (African clawed frog) protein is Mitochondrial fission regulator 1-like-A (mtfr1l-a).